The chain runs to 797 residues: Xaa-Pro dipeptidyl-peptidase (797 aa).

Residues S370, D490, and H521 each act as charge relay system in the active site.

Belongs to the peptidase S15 family. Homodimer.

It localises to the cytoplasm. The catalysed reaction is Hydrolyzes Xaa-Pro-|- bonds to release unblocked, N-terminal dipeptides from substrates including Ala-Pro-|-p-nitroanilide and (sequentially) Tyr-Pro-|-Phe-Pro-|-Gly-Pro-|-Ile.. In terms of biological role, removes N-terminal dipeptides sequentially from polypeptides having unsubstituted N-termini provided that the penultimate residue is proline. This is Xaa-Pro dipeptidyl-peptidase from Lacticaseibacillus paracasei (strain ATCC 334 / BCRC 17002 / CCUG 31169 / CIP 107868 / KCTC 3260 / NRRL B-441) (Lactobacillus paracasei).